We begin with the raw amino-acid sequence, 103 residues long: MSGRGKGGKGLGKGGAKRHRKVLRDNIQGITKPAIRRLARRGGVKRISGLIYEETRGVLKIFLENVIRDAVTYTEHARRKTVTAMDVVYALKRQGRTLYGFGG.

Residues 1–14 (MSGRGKGGKGLGKG) show a composition bias toward gly residues. The interval 1 to 20 (MSGRGKGGKGLGKGGAKRHR) is disordered. The residue at position 2 (Ser-2) is an N-acetylserine. Lys-17 is subject to N6-acetyllysine. The DNA-binding element occupies 17-21 (KRHRK). Lys-21 is modified (N6-methyllysine).

The protein belongs to the histone H4 family. In terms of assembly, the nucleosome is a histone octamer containing two molecules each of H2A, H2B, H3 and H4 assembled in one H3-H4 heterotetramer and two H2A-H2B heterodimers. The octamer wraps approximately 147 bp of DNA.

The protein resides in the nucleus. It localises to the chromosome. Functionally, core component of nucleosome. Nucleosomes wrap and compact DNA into chromatin, limiting DNA accessibility to the cellular machineries which require DNA as a template. Histones thereby play a central role in transcription regulation, DNA repair, DNA replication and chromosomal stability. DNA accessibility is regulated via a complex set of post-translational modifications of histones, also called histone code, and nucleosome remodeling. The sequence is that of Histone H4 from Eucalyptus globulus (Tasmanian blue gum).